Here is a 203-residue protein sequence, read N- to C-terminus: ATP-dependent Clp protease proteolytic subunit 2 (203 aa).

Ser-98 functions as the Nucleophile in the catalytic mechanism. His-123 is a catalytic residue.

The protein belongs to the peptidase S14 family. As to quaternary structure, fourteen ClpP subunits assemble into 2 heptameric rings which stack back to back to give a disk-like structure with a central cavity, resembling the structure of eukaryotic proteasomes.

It localises to the cytoplasm. It carries out the reaction Hydrolysis of proteins to small peptides in the presence of ATP and magnesium. alpha-casein is the usual test substrate. In the absence of ATP, only oligopeptides shorter than five residues are hydrolyzed (such as succinyl-Leu-Tyr-|-NHMec, and Leu-Tyr-Leu-|-Tyr-Trp, in which cleavage of the -Tyr-|-Leu- and -Tyr-|-Trp bonds also occurs).. Functionally, cleaves peptides in various proteins in a process that requires ATP hydrolysis. Has a chymotrypsin-like activity. Plays a major role in the degradation of misfolded proteins. The polypeptide is ATP-dependent Clp protease proteolytic subunit 2 (Chlamydia trachomatis serovar A (strain ATCC VR-571B / DSM 19440 / HAR-13)).